A 240-amino-acid polypeptide reads, in one-letter code: Phosphatidylserine decarboxylase proenzyme (240 aa).

Ser-209 serves as the catalytic Schiff-base intermediate with substrate; via pyruvic acid. A Pyruvic acid (Ser); by autocatalysis modification is found at Ser-209.

The protein belongs to the phosphatidylserine decarboxylase family. PSD-A subfamily. Heterodimer of a large membrane-associated beta subunit and a small pyruvoyl-containing alpha subunit. Pyruvate is required as a cofactor. In terms of processing, is synthesized initially as an inactive proenzyme. Formation of the active enzyme involves a self-maturation process in which the active site pyruvoyl group is generated from an internal serine residue via an autocatalytic post-translational modification. Two non-identical subunits are generated from the proenzyme in this reaction, and the pyruvate is formed at the N-terminus of the alpha chain, which is derived from the carboxyl end of the proenzyme. The post-translation cleavage follows an unusual pathway, termed non-hydrolytic serinolysis, in which the side chain hydroxyl group of the serine supplies its oxygen atom to form the C-terminus of the beta chain, while the remainder of the serine residue undergoes an oxidative deamination to produce ammonia and the pyruvoyl prosthetic group on the alpha chain.

The protein localises to the cell membrane. It catalyses the reaction a 1,2-diacyl-sn-glycero-3-phospho-L-serine + H(+) = a 1,2-diacyl-sn-glycero-3-phosphoethanolamine + CO2. The protein operates within phospholipid metabolism; phosphatidylethanolamine biosynthesis; phosphatidylethanolamine from CDP-diacylglycerol: step 2/2. Functionally, catalyzes the formation of phosphatidylethanolamine (PtdEtn) from phosphatidylserine (PtdSer). This Mycobacterium avium (strain 104) protein is Phosphatidylserine decarboxylase proenzyme.